Here is a 106-residue protein sequence, read N- to C-terminus: Large ribosomal subunit protein eL36 (106 aa).

Positions valine 75 to aspartate 93 are enriched in basic and acidic residues. The interval valine 75 to tyrosine 106 is disordered.

Belongs to the eukaryotic ribosomal protein eL36 family.

The sequence is that of Large ribosomal subunit protein eL36 (RPL36) from Daucus carota (Wild carrot).